The chain runs to 334 residues: Mediator of RNA polymerase II transcription subunit 4 (334 aa).

Residues 71–100 (QEREQLIRTLEAHVEKRDEVIQQLETNLKS) adopt a coiled-coil conformation. The tract at residues 193 to 334 (PLITSPSASS…ASKKTGSSNK (142 aa)) is disordered. 2 stretches are compositionally biased toward polar residues: residues 194-206 (LITSPSASSSNGG) and 251-282 (NEKQWQNPGVSGATSTQSPYNRVSQSPSSSPN).

The protein belongs to the Mediator complex subunit 4 family. Component of the Mediator complex.

The protein resides in the nucleus. Its function is as follows. Component of the Mediator complex, a coactivator involved in the regulated transcription of nearly all RNA polymerase II-dependent genes. Mediator functions as a bridge to convey information from gene-specific regulatory proteins to the basal RNA polymerase II transcription machinery. Mediator is recruited to promoters by direct interactions with regulatory proteins and serves as a scaffold for the assembly of a functional preinitiation complex with RNA polymerase II and the general transcription factors. This is Mediator of RNA polymerase II transcription subunit 4 (mdt-4) from Caenorhabditis elegans.